Here is a 120-residue protein sequence, read N- to C-terminus: uncharacterized protein (120 aa).

The interval 79–120 (TGNEIPPEPEQEVVASPVTEQKKAEPSAPPKGSKKKKRGKKK) is disordered. The span at 110–120 (GSKKKKRGKKK) shows a compositional bias: basic residues.

This is an uncharacterized protein from Schizosaccharomyces pombe (strain 972 / ATCC 24843) (Fission yeast).